The chain runs to 256 residues: Diacetyl reductase [(S)-acetoin forming] (256 aa).

Residues 6–33 (LVTG…AIAD) and aspartate 59 contribute to the NAD(+) site. A substrate-binding site is contributed by serine 139. The active-site Proton acceptor is the tyrosine 152. Lysine 156 contributes to the NAD(+) binding site.

It belongs to the short-chain dehydrogenases/reductases (SDR) family. In terms of assembly, homotetramer.

The enzyme catalyses (S)-acetoin + NAD(+) = diacetyl + NADH + H(+). In terms of biological role, catalyzes the reversible reduction of (S)-acetoin to 2,3-butanediol in the presence of NADH. The polypeptide is Diacetyl reductase [(S)-acetoin forming] (budC) (Klebsiella pneumoniae).